Consider the following 158-residue polypeptide: 18.2 kDa class I heat shock protein (158 aa).

In terms of domain architecture, sHSP spans glutamate 44–glycine 158.

The protein belongs to the small heat shock protein (HSP20) family. In terms of assembly, forms oligomeric structures.

It is found in the cytoplasm. The protein is 18.2 kDa class I heat shock protein (HSP18.2) of Medicago sativa (Alfalfa).